The following is a 386-amino-acid chain: Cytochrome b (386 aa).

A run of 4 helical transmembrane segments spans residues F39 to M59, F83 to M104, W119 to L139, and F184 to L204. Heme b contacts are provided by H89 and H103. 2 residues coordinate heme b: H188 and H202. H207 lines the a ubiquinone pocket. 4 helical membrane passes run Y232–M252, L294–H314, L326–A346, and Y353–L374.

This sequence belongs to the cytochrome b family. The main subunits of complex b-c1 are: cytochrome b, cytochrome c1 and the Rieske protein. Heme b serves as cofactor.

Its subcellular location is the mitochondrion inner membrane. Component of the ubiquinol-cytochrome c reductase complex (complex III or cytochrome b-c1 complex) that is part of the mitochondrial respiratory chain. The b-c1 complex mediates electron transfer from ubiquinol to cytochrome c. Contributes to the generation of a proton gradient across the mitochondrial membrane that is then used for ATP synthesis. The chain is Cytochrome b (MT-CYB) from Sarcophyton glaucum (Toadstool umbrella leather coral).